Consider the following 488-residue polypeptide: UDP-N-acetylmuramate--L-alanine ligase (488 aa).

127 to 133 (GTHGKTT) contacts ATP.

The protein belongs to the MurCDEF family.

The protein resides in the cytoplasm. The catalysed reaction is UDP-N-acetyl-alpha-D-muramate + L-alanine + ATP = UDP-N-acetyl-alpha-D-muramoyl-L-alanine + ADP + phosphate + H(+). The protein operates within cell wall biogenesis; peptidoglycan biosynthesis. Cell wall formation. The protein is UDP-N-acetylmuramate--L-alanine ligase of Shewanella putrefaciens (strain CN-32 / ATCC BAA-453).